Reading from the N-terminus, the 350-residue chain is Putative [LysW]-lysine/[LysW]-ornithine hydrolase (350 aa).

His-72 serves as a coordination point for Zn(2+). Asp-74 is an active-site residue. Asp-96 provides a ligand contact to Zn(2+). Residue Glu-128 is the Proton acceptor of the active site. 3 residues coordinate Zn(2+): Glu-129, Glu-152, and His-321.

The protein belongs to the peptidase M20A family. LysK subfamily. Zn(2+) is required as a cofactor. Co(2+) serves as cofactor.

Its subcellular location is the cytoplasm. It catalyses the reaction [amino-group carrier protein]-C-terminal-gamma-(L-lysyl)-L-glutamate + H2O = [amino-group carrier protein]-C-terminal-L-glutamate + L-lysine. The enzyme catalyses [amino-group carrier protein]-C-terminal-gamma-(L-ornithyl)-L-glutamate + H2O = [amino-group carrier protein]-C-terminal-L-glutamate + L-ornithine. The protein operates within amino-acid biosynthesis; L-lysine biosynthesis via AAA pathway; L-lysine from L-alpha-aminoadipate (Thermus route): step 5/5. Its pathway is amino-acid biosynthesis; L-arginine biosynthesis. Its function is as follows. Catalyzes the release of L-lysine from [LysW]-gamma-L-lysine and the release of L-ornithine from [LysW]-L-ornithine. The sequence is that of Putative [LysW]-lysine/[LysW]-ornithine hydrolase from Aeropyrum pernix (strain ATCC 700893 / DSM 11879 / JCM 9820 / NBRC 100138 / K1).